The primary structure comprises 264 residues: Putative hydro-lyase Bpet2233 (264 aa).

Belongs to the D-glutamate cyclase family.

The chain is Putative hydro-lyase Bpet2233 from Bordetella petrii (strain ATCC BAA-461 / DSM 12804 / CCUG 43448).